A 334-amino-acid polypeptide reads, in one-letter code: Catabolite repressor/activator (334 aa).

Residues Met1–Ala58 enclose the HTH lacI-type domain. Residues Leu3–Asn22 constitute a DNA-binding region (H-T-H motif).

As to quaternary structure, homotetramer.

Global transcriptional regulator, which plays an important role in the regulation of carbon metabolism. In Escherichia coli O157:H7, this protein is Catabolite repressor/activator (cra).